A 162-amino-acid polypeptide reads, in one-letter code: MSGMRVYLGADHAGYELKRQIIEHLKQSGHQPIDCGAFSYDVDDEYPAFCITAATRTVADPGSLGIVLGGSGNGEQIAANKVVGARCALAWSVETARLAREHNNAQLIGIGGRMHTVAEALTIVDAFVTTPWSEAQRHQRRIDILAEFERTHQAPPVPGAQA.

D-ribulose 5-phosphate contacts are provided by residues 11–12 and 70–74; these read DH and GSGNG. Glu75 serves as the catalytic Proton acceptor. His102 (proton donor) is an active-site residue. 4 residues coordinate D-ribulose 5-phosphate: Asn103, Arg113, Arg137, and Arg141.

The protein belongs to the LacAB/RpiB family. Homodimer.

The catalysed reaction is aldehydo-D-ribose 5-phosphate = D-ribulose 5-phosphate. Its pathway is carbohydrate degradation; pentose phosphate pathway; D-ribose 5-phosphate from D-ribulose 5-phosphate (non-oxidative stage): step 1/1. Its function is as follows. Catalyzes the interconversion of ribulose-5-P and ribose-5-P. The sequence is that of Ribose-5-phosphate isomerase B from Mycobacterium leprae (strain TN).